The primary structure comprises 328 residues: tRNA uridine(34) hydroxylase (328 aa).

The 95-residue stretch at Leu-130 to Glu-224 folds into the Rhodanese domain. Cys-184 (cysteine persulfide intermediate) is an active-site residue.

Belongs to the TrhO family.

The catalysed reaction is uridine(34) in tRNA + AH2 + O2 = 5-hydroxyuridine(34) in tRNA + A + H2O. Catalyzes oxygen-dependent 5-hydroxyuridine (ho5U) modification at position 34 in tRNAs. The polypeptide is tRNA uridine(34) hydroxylase (Streptococcus pneumoniae serotype 19F (strain G54)).